We begin with the raw amino-acid sequence, 313 residues long: MTQMPDPQNPIRIGTRGSALALAQAHETRDRLMAAHGLAADAFRIVVIKTTGDRVLDRPLKEIGGKGLFTREIEDALLAHEIDIAVHSMKDMPTIQPEGLVIDCYLPREDVRDAFVSAQFAAISELPQGAVVGSSSLRRRAQLAARRPDLKLVEFRGNVQTRLKKLEDGVAVATFLAMAGLTRLGMLHVARGAVEPDEMLPAVAQGCIGVERRADDARTASLLAAISDRDSALRVTAERAFLARLDGSCQTPIAGLAELQGDRLRLRGEILRPDGSEVIAAERVGPAADGAAMGTDLAEELRGRAPADFFDWS.

C249 is modified (S-(dipyrrolylmethanemethyl)cysteine).

It belongs to the HMBS family. As to quaternary structure, monomer. Requires dipyrromethane as cofactor.

The enzyme catalyses 4 porphobilinogen + H2O = hydroxymethylbilane + 4 NH4(+). It functions in the pathway porphyrin-containing compound metabolism; protoporphyrin-IX biosynthesis; coproporphyrinogen-III from 5-aminolevulinate: step 2/4. In terms of biological role, tetrapolymerization of the monopyrrole PBG into the hydroxymethylbilane pre-uroporphyrinogen in several discrete steps. This Paracoccus denitrificans (strain Pd 1222) protein is Porphobilinogen deaminase.